The following is a 953-amino-acid chain: ABC transporter A family member 11 (953 aa).

6 consecutive transmembrane segments (helical) span residues 33–53 (CLQI…EEAM), 230–250 (GPVF…GALV), 277–297 (TWEG…GMIF), 307–327 (FVLV…LAFA), 341–361 (VGFL…TGFP), and 417–437 (VISI…WFVL). An ABC transporter domain is found at 519–764 (VQIHGLAKTY…FGTGFVATVS (246 aa)). 565–572 (GPNGAGKT) lines the ATP pocket.

This sequence belongs to the ABC transporter superfamily. ABCA family. CPR flippase (TC 3.A.1.211) subfamily.

The protein localises to the membrane. The chain is ABC transporter A family member 11 (ABCA11) from Arabidopsis thaliana (Mouse-ear cress).